A 684-amino-acid chain; its full sequence is Transcriptional regulatory protein RCO1 (684 aa).

Met1 carries the post-translational modification N-acetylmethionine. The segment at 1–48 (MDTSKKDTTRSPSHSNSSSPSSSSLSSSSSKEKKRPKRLSSQNVNYDL) is disordered. The segment covering 10-29 (RSPSHSNSSSPSSSSLSSSS) has biased composition (low complexity). Ser68 bears the Phosphoserine mark. The segment at 260–309 (EDFCSACNQSGSFLCCDTCPKSFHFLCLDPPIDPNNLPKGDWHCNECKFK) adopts a PHD-type 1 zinc-finger fold. A PHD-type 2; atypical zinc finger spans residues 414–472 (FLICYKCNQTRLGSWSHPENSRLIMTCDYCQTPWHLDCVPRASFKNLGSKWKCPLHSPT). Ser683 is modified (phosphoserine).

In terms of assembly, component of the RPD3C(S) complex composed of at least EAF3, RCO1, RPD3, SIN3, and UME1.

Its subcellular location is the nucleus. Functionally, catalytic component of the RPD3C(S) histone deacetylase complex responsible for the deacetylation of lysine residues on the N-terminal part of the core histones (H2A, H2B, H3 and H4). Histone deacetylation gives a tag for epigenetic repression and plays an important role in transcriptional regulation, cell cycle progression, DNA damage response, osmotic stress response and developmental events. This chain is Transcriptional regulatory protein RCO1 (RCO1), found in Saccharomyces cerevisiae (strain ATCC 204508 / S288c) (Baker's yeast).